Here is a 50-residue protein sequence, read N- to C-terminus: Cuticle protein CP498 (50 aa).

2 tandem repeats follow at residues 6 to 23 (ATVGESGIITPGGRLIQL) and 30 to 47 (ILEGPSAALLSNGDFVTY).

In terms of tissue distribution, calcified shell.

This Cancer pagurus (Rock crab) protein is Cuticle protein CP498.